The primary structure comprises 177 residues: Cyclic pyranopterin monophosphate synthase (177 aa).

Substrate is bound by residues 89 to 91 (LCH) and 125 to 126 (ME). The active site involves D140.

This sequence belongs to the MoaC family. As to quaternary structure, homohexamer; trimer of dimers.

The catalysed reaction is (8S)-3',8-cyclo-7,8-dihydroguanosine 5'-triphosphate = cyclic pyranopterin phosphate + diphosphate. The protein operates within cofactor biosynthesis; molybdopterin biosynthesis. Catalyzes the conversion of (8S)-3',8-cyclo-7,8-dihydroguanosine 5'-triphosphate to cyclic pyranopterin monophosphate (cPMP). This is Cyclic pyranopterin monophosphate synthase from Streptomyces griseus subsp. griseus (strain JCM 4626 / CBS 651.72 / NBRC 13350 / KCC S-0626 / ISP 5235).